A 60-amino-acid polypeptide reads, in one-letter code: Large ribosomal subunit protein bL32 (60 aa).

Positions 1–16 (MAVPKRKTSPSKRGMR) are enriched in basic residues. Positions 1–60 (MAVPKRKTSPSKRGMRRSADALKAPTYVEDKNSGELRRPHHVDLKTGMYRGRQVLEPKEA) are disordered. The segment covering 28-44 (VEDKNSGELRRPHHVDL) has biased composition (basic and acidic residues).

Belongs to the bacterial ribosomal protein bL32 family.

The protein is Large ribosomal subunit protein bL32 of Chelativorans sp. (strain BNC1).